A 148-amino-acid chain; its full sequence is Large ribosomal subunit protein bL9 (148 aa).

This sequence belongs to the bacterial ribosomal protein bL9 family.

Its function is as follows. Binds to the 23S rRNA. In Acidithiobacillus ferrooxidans (strain ATCC 23270 / DSM 14882 / CIP 104768 / NCIMB 8455) (Ferrobacillus ferrooxidans (strain ATCC 23270)), this protein is Large ribosomal subunit protein bL9.